The following is a 120-amino-acid chain: Large ribosomal subunit protein eL8 (120 aa).

The protein belongs to the eukaryotic ribosomal protein eL8 family. Part of the 50S ribosomal subunit. Probably part of the RNase P complex.

Its subcellular location is the cytoplasm. Its function is as follows. Multifunctional RNA-binding protein that recognizes the K-turn motif in ribosomal RNA, the RNA component of RNase P, box H/ACA, box C/D and box C'/D' sRNAs. This is Large ribosomal subunit protein eL8 from Haloquadratum walsbyi (strain DSM 16790 / HBSQ001).